Reading from the N-terminus, the 217-residue chain is Large ribosomal subunit protein uL1 (217 aa).

This sequence belongs to the universal ribosomal protein uL1 family. As to quaternary structure, part of the 50S ribosomal subunit.

Binds directly to 23S rRNA. Probably involved in E site tRNA release. In terms of biological role, protein L1 is also a translational repressor protein, it controls the translation of its operon by binding to its mRNA. The polypeptide is Large ribosomal subunit protein uL1 (Aeropyrum pernix (strain ATCC 700893 / DSM 11879 / JCM 9820 / NBRC 100138 / K1)).